Here is a 916-residue protein sequence, read N- to C-terminus: Chitin synthase B (916 aa).

Disordered stretches follow at residues Met1–Leu75 and Ala118–Gly141. A compositionally biased stretch (basic and acidic residues) spans His14 to Ser26. Polar residues predominate over residues Arg59–Leu75. Transmembrane regions (helical) follow at residues Arg544 to Gly561, Phe588 to Val608, Ile629 to Ala649, Ser664 to Val684, Ile716 to Leu736, Leu845 to Leu865, and Ala884 to Leu904.

It belongs to the chitin synthase family. Class III subfamily. In terms of assembly, interacts with kibesin kinA. Post-translationally, activity requires trypsin activation, suggesting a zymogenic nature. Phosphorylated at yet unidentified residues in a N-terminal disordered region-dependent manner.

The protein resides in the cell membrane. It localises to the cell tip. The protein localises to the cell septum. It carries out the reaction [(1-&gt;4)-N-acetyl-beta-D-glucosaminyl](n) + UDP-N-acetyl-alpha-D-glucosamine = [(1-&gt;4)-N-acetyl-beta-D-glucosaminyl](n+1) + UDP + H(+). With respect to regulation, activity is stimulated by Mg(2+) and is inhibited by polyoxin D. Functionally, polymerizes chitin, a structural polymer of the cell wall and septum, by transferring the sugar moiety of UDP-GlcNAc to the non-reducing end of the growing chitin polymer. Does not substantially contribute to the rigidity of the cell wall but is necessary for normal hyphal growth and organization. In addition to its functions in the formation of normal cell walls of hyphae, is also involved in conidiophore and conidia development. The sequence is that of Chitin synthase B from Emericella nidulans (strain FGSC A4 / ATCC 38163 / CBS 112.46 / NRRL 194 / M139) (Aspergillus nidulans).